The following is a 361-amino-acid chain: MGGAVSAGEDNDELIDNLKEAQYIRSELVEQAFRAIDRADYYLEEFKENAYKDLAWKHGNIHLSAPCIYSEVMEALDLQPGLSFLNLGSGTGYLSSMVGLILGPFGVNHGVELHSDVTEYAKQKLDFFIRTSDSFDKFDFCEPSFVTGNCLEISPDCSQYDRVYCGAGVQKEHEEYMKSLLKVGGILVMPLEEKLTKITRTGPSAWETKKILAVSFAPLIQPCQSESGKSRLVQLPPLAVRSLQDLARIAIRGTIKKVIHQEAVNKNGNGLKNTPRFKRRRVRRRRLETIVFLDKEVFASRISNPSDDNSSGDLEEERREEEATTPPDAKPEPPVNFLREKVLSLPLPDPLKYYLLYYREK.

Residue Gly2 is the site of N-myristoyl glycine attachment. Ser64 is a catalytic residue. AdoMet binding motif regions lie at residues 85 to 94, 160 to 164, and 181 to 191; these read LNLGSGTGYL, YDRVY, and LKVGGILVMPL. A BC-box region spans residues 240–250; sequence VRSLQDLARIA. A compositionally biased stretch (polar residues) spans 303-312; sequence SNPSDDNSSG. The interval 303–335 is disordered; that stretch reads SNPSDDNSSGDLEEERREEEATTPPDAKPEPPV. Positions 345 to 348 are CUL-box; that stretch reads LPLP.

Belongs to the methyltransferase superfamily. L-isoaspartyl/D-aspartyl protein methyltransferase family.

It is found in the cytoplasm. Functionally, may act as a substrate recognition component of an ECS (Elongin BC-CUL5-SOCS-box protein) E3 ubiquitin ligase complex which mediates the ubiquitination and subsequent proteasomal degradation of target proteins. May bind to the methyltransferase cofactor S-adenosylmethionine (AdoMet) via the N-terminal AdoMet binding motif, but probably does not display methyltransferase activity. This chain is Protein-L-isoaspartate O-methyltransferase domain-containing protein 2 (PCMTD2), found in Bos taurus (Bovine).